The sequence spans 186 residues: Oligoribonuclease (186 aa).

Residues 8–171 (LIWIDLEMTG…DDIRESIAEL (164 aa)) enclose the Exonuclease domain. Tyrosine 129 is an active-site residue.

It belongs to the oligoribonuclease family.

Its subcellular location is the cytoplasm. Its function is as follows. 3'-to-5' exoribonuclease specific for small oligoribonucleotides. This Mannheimia succiniciproducens (strain KCTC 0769BP / MBEL55E) protein is Oligoribonuclease.